Here is a 439-residue protein sequence, read N- to C-terminus: AT-hook motif nuclear-localized protein 13 (439 aa).

Disordered regions lie at residues Met1–Asn46, Gln69–Thr216, and Gly342–Gln439. Low complexity-rich tracts occupy residues Gln9–Gln31 and Pro79–Gln95. A compositionally biased stretch (polar residues) spans Ser109–Ser120. Positions Val130 to Lys139 are enriched in basic residues. A Bipartite nuclear localization signal motif is present at residues Lys131–Lys139. The a.T hook 1 DNA-binding region spans Lys131 to Asp143. 2 stretches are compositionally biased toward gly residues: residues Asp143 to Ser152 and Tyr171 to Ser183. The segment at residues Lys196–Lys208 is a DNA-binding region (a.T hook 2). The region spanning Gly217 to Ala359 is the PPC domain. Positions Gln347–Glu357 are enriched in polar residues. Low complexity-rich tracts occupy residues Ser376–Ser386 and Asn403–Ser416. Residues Met428–Gln439 are compositionally biased toward polar residues.

Its subcellular location is the nucleus. Functionally, transcription factor that specifically binds AT-rich DNA sequences related to the nuclear matrix attachment regions (MARs). The chain is AT-hook motif nuclear-localized protein 13 from Arabidopsis thaliana (Mouse-ear cress).